The following is a 235-amino-acid chain: Ferric nitrobindin-like protein (235 aa).

A disordered region spans residues 1–59; the sequence is MSDLASEGSDPAERASEHSNGNAPADRPARRSGDQAVADAAERAKATGSRNIPVLPDLP. Residues 85–91 carry the GXWXGXG motif; the sequence is GVWRGEG.

This sequence belongs to the nitrobindin family.

The sequence is that of Ferric nitrobindin-like protein from Nocardia farcinica (strain IFM 10152).